Reading from the N-terminus, the 508-residue chain is Histidine ammonia-lyase (508 aa).

The 5-imidazolinone (Ala-Gly) cross-link spans 145–147; the sequence is ASG. Serine 146 bears the 2,3-didehydroalanine (Ser) mark.

Belongs to the PAL/histidase family. Post-translationally, contains an active site 4-methylidene-imidazol-5-one (MIO), which is formed autocatalytically by cyclization and dehydration of residues Ala-Ser-Gly.

Its subcellular location is the cytoplasm. The catalysed reaction is L-histidine = trans-urocanate + NH4(+). Its pathway is amino-acid degradation; L-histidine degradation into L-glutamate; N-formimidoyl-L-glutamate from L-histidine: step 1/3. The sequence is that of Histidine ammonia-lyase from Myxococcus xanthus (strain DK1622).